We begin with the raw amino-acid sequence, 283 residues long: Phosphatidylglycerol--prolipoprotein diacylglyceryl transferase (283 aa).

The next 3 helical transmembrane spans lie at 17 to 37 (LAVRWYALSYILGFILFTFLG), 56 to 76 (FLTWGILGVILGGRLGYVLFY), and 92 to 112 (WEGGMSFHGGFLGVVIAIWLF). Residue Arg-139 participates in a 1,2-diacyl-sn-glycero-3-phospho-(1'-sn-glycerol) binding. A run of 2 helical transmembrane segments spans residues 222-242 (GQTAALFLGGYGVFRFIAEFA) and 255-275 (GLSMGQWLSVPMIVLGIVGFV).

This sequence belongs to the Lgt family.

It is found in the cell inner membrane. The catalysed reaction is L-cysteinyl-[prolipoprotein] + a 1,2-diacyl-sn-glycero-3-phospho-(1'-sn-glycerol) = an S-1,2-diacyl-sn-glyceryl-L-cysteinyl-[prolipoprotein] + sn-glycerol 1-phosphate + H(+). It functions in the pathway protein modification; lipoprotein biosynthesis (diacylglyceryl transfer). Its function is as follows. Catalyzes the transfer of the diacylglyceryl group from phosphatidylglycerol to the sulfhydryl group of the N-terminal cysteine of a prolipoprotein, the first step in the formation of mature lipoproteins. This is Phosphatidylglycerol--prolipoprotein diacylglyceryl transferase from Neisseria gonorrhoeae (strain ATCC 700825 / FA 1090).